Here is a 109-residue protein sequence, read N- to C-terminus: Thioredoxin 2 (109 aa).

One can recognise a Thioredoxin domain in the interval S2–G109. A disulfide bond links C33 and C36.

The protein belongs to the thioredoxin family.

Functionally, participates in various redox reactions through the reversible oxidation of its active center dithiol to a disulfide and catalyzes dithiol-disulfide exchange reactions. The protein is Thioredoxin 2 (trx2) of Chlorobaculum tepidum (strain ATCC 49652 / DSM 12025 / NBRC 103806 / TLS) (Chlorobium tepidum).